Consider the following 190-residue polypeptide: dCTP deaminase, dUMP-forming (190 aa).

DCTP contacts are provided by residues 101–106, Asp-119, 127–129, Gln-148, Tyr-162, and Gln-174; these read KSSLGR and TLE. The active-site Proton donor/acceptor is Glu-129. Positions 161–190 are disordered; the sequence is PYGSSGVGSKYQGQRGPTPSRSYQNFIRST. The segment covering 171–190 has biased composition (polar residues); the sequence is YQGQRGPTPSRSYQNFIRST.

The protein belongs to the dCTP deaminase family. In terms of assembly, homotrimer.

It catalyses the reaction dCTP + 2 H2O = dUMP + NH4(+) + diphosphate. It participates in pyrimidine metabolism; dUMP biosynthesis; dUMP from dCTP: step 1/1. Bifunctional enzyme that catalyzes both the deamination of dCTP to dUTP and the hydrolysis of dUTP to dUMP without releasing the toxic dUTP intermediate. The polypeptide is dCTP deaminase, dUMP-forming (Mycobacterium marinum (strain ATCC BAA-535 / M)).